The following is a 339-amino-acid chain: Terpene synthase 7 (339 aa).

Positions 79-84 (DDFLES) match the DDxx(x)D/E motif motif. Residues 219 to 227 (NDCASYAKE) carry the NDxxSxxxD/E motif motif.

The protein belongs to the terpene synthase family.

It catalyses the reaction (2E,6E)-farnesyl diphosphate = (-)-beta-barbatene + diphosphate. In terms of biological role, terpene synthase that converts its substrate farnesyl diphosphate (FPP) into the sesquiterpene beta-barbatene. The polypeptide is Terpene synthase 7 (Dictyostelium discoideum (Social amoeba)).